The following is a 154-amino-acid chain: OCIA domain-containing protein 2 (154 aa).

An OCIA domain is found at 1–120; sequence MASVSTHGNQ…HSFEDQLRGA (120 aa). Lysine 41 is modified (N6-acetyllysine).

In terms of assembly, interacts (via OCIA domain) with OCIAD1/ASRIJ and STAT3. As to expression, abundant in kidney, liver and brain.

The protein localises to the endosome. The protein resides in the mitochondrion. It localises to the mitochondrion inner membrane. Has an essential role in the assembly of mitochondrial respiratory chain complex III. Is also required for STAT3 activation and plays a role in cell migration. This Mus musculus (Mouse) protein is OCIA domain-containing protein 2 (Ociad2).